The primary structure comprises 277 residues: 4-hydroxy-tetrahydrodipicolinate reductase (277 aa).

An NAD(+)-binding site is contributed by 9–14; sequence GATGRM. Residue K37 participates in NADP(+) binding. 75 to 77 serves as a coordination point for NAD(+); that stretch reads GTS. H132 (proton donor/acceptor) is an active-site residue. K136 serves as the catalytic Proton donor. 142–143 serves as a coordination point for (S)-2,3,4,5-tetrahydrodipicolinate; the sequence is GT. The tract at residues 245-277 is disordered; sequence SRERATQTAPTGAASGPVDDGGPSGQAATVTSA.

Belongs to the DapB family.

It is found in the cytoplasm. The catalysed reaction is (S)-2,3,4,5-tetrahydrodipicolinate + NAD(+) + H2O = (2S,4S)-4-hydroxy-2,3,4,5-tetrahydrodipicolinate + NADH + H(+). It carries out the reaction (S)-2,3,4,5-tetrahydrodipicolinate + NADP(+) + H2O = (2S,4S)-4-hydroxy-2,3,4,5-tetrahydrodipicolinate + NADPH + H(+). The protein operates within amino-acid biosynthesis; L-lysine biosynthesis via DAP pathway; (S)-tetrahydrodipicolinate from L-aspartate: step 4/4. In terms of biological role, catalyzes the conversion of 4-hydroxy-tetrahydrodipicolinate (HTPA) to tetrahydrodipicolinate. In Clavibacter sepedonicus (Clavibacter michiganensis subsp. sepedonicus), this protein is 4-hydroxy-tetrahydrodipicolinate reductase.